A 621-amino-acid polypeptide reads, in one-letter code: DNA mismatch repair protein MutL (621 aa).

Belongs to the DNA mismatch repair MutL/HexB family.

Its function is as follows. This protein is involved in the repair of mismatches in DNA. It is required for dam-dependent methyl-directed DNA mismatch repair. May act as a 'molecular matchmaker', a protein that promotes the formation of a stable complex between two or more DNA-binding proteins in an ATP-dependent manner without itself being part of a final effector complex. The protein is DNA mismatch repair protein MutL of Petrotoga mobilis (strain DSM 10674 / SJ95).